A 986-amino-acid chain; its full sequence is Bifunctional glutamine synthetase adenylyltransferase/adenylyl-removing enzyme (986 aa).

An adenylyl removase region spans residues Met-1–Thr-470. Positions Ala-476 to Pro-986 are adenylyl transferase.

It belongs to the GlnE family. Mg(2+) is required as a cofactor.

The catalysed reaction is [glutamine synthetase]-O(4)-(5'-adenylyl)-L-tyrosine + phosphate = [glutamine synthetase]-L-tyrosine + ADP. It carries out the reaction [glutamine synthetase]-L-tyrosine + ATP = [glutamine synthetase]-O(4)-(5'-adenylyl)-L-tyrosine + diphosphate. Involved in the regulation of glutamine synthetase GlnA, a key enzyme in the process to assimilate ammonia. When cellular nitrogen levels are high, the C-terminal adenylyl transferase (AT) inactivates GlnA by covalent transfer of an adenylyl group from ATP to specific tyrosine residue of GlnA, thus reducing its activity. Conversely, when nitrogen levels are low, the N-terminal adenylyl removase (AR) activates GlnA by removing the adenylyl group by phosphorolysis, increasing its activity. The regulatory region of GlnE binds the signal transduction protein PII (GlnB) which indicates the nitrogen status of the cell. The polypeptide is Bifunctional glutamine synthetase adenylyltransferase/adenylyl-removing enzyme (Mesorhizobium japonicum (strain LMG 29417 / CECT 9101 / MAFF 303099) (Mesorhizobium loti (strain MAFF 303099))).